Reading from the N-terminus, the 285-residue chain is Aquaporin PIP2-5 (285 aa).

2 helical membrane passes run 38–58 and 75–95; these read AVIA…ATVI and CGGV…FILV. Positions 107-109 match the NPA 1 motif; that stretch reads NPA. 3 helical membrane-spanning segments follow: residues 126–146, 168–188, and 202–222; these read LLYI…VKGF, GTGL…VFSA, and VLAP…TIPI. Positions 228–230 match the NPA 2 motif; that stretch reads NPA. Residues 250 to 270 form a helical membrane-spanning segment; it reads IFWVGPFIGAAIAAAYHQYVL.

The protein belongs to the MIP/aquaporin (TC 1.A.8) family. PIP (TC 1.A.8.11) subfamily. In terms of assembly, homomers. May interact with PIP1-2 to form heteromers. In terms of tissue distribution, specifically expressed in roots, in the exodermis, endodermis and xylem parenchyma. Polar localization to the external periclinal side of epidermal cells in root apices.

It localises to the cell membrane. Water channel required to facilitate the transport of water across cell membrane. Its function is impaired by Hg(2+). May play a role in water uptake from the root surface. Active as homomers. Increased activity when heteromerization with PIP1-2. This chain is Aquaporin PIP2-5 (PIP2-5), found in Zea mays (Maize).